Here is a 69-residue protein sequence, read N- to C-terminus: DNA-directed RNA polymerase subunit epsilon (69 aa).

Belongs to the RNA polymerase subunit epsilon family. As to quaternary structure, RNAP is composed of a core of 2 alpha, a beta and a beta' subunit. The core is associated with a delta subunit, and at least one of epsilon or omega. When a sigma factor is associated with the core the holoenzyme is formed, which can initiate transcription.

It catalyses the reaction RNA(n) + a ribonucleoside 5'-triphosphate = RNA(n+1) + diphosphate. In terms of biological role, a non-essential component of RNA polymerase (RNAP). The chain is DNA-directed RNA polymerase subunit epsilon from Halalkalibacterium halodurans (strain ATCC BAA-125 / DSM 18197 / FERM 7344 / JCM 9153 / C-125) (Bacillus halodurans).